The chain runs to 198 residues: Sortase D (198 aa).

A helical membrane pass occupies residues 7 to 25 (LFIIAAGLVIAGYGGFKLI). Positions 36–46 (KEAKLAAKKPQ) are enriched in basic and acidic residues. The tract at residues 36–67 (KEAKLAAKKPQEASGTKNSTDQAKNKASFKPE) is disordered. Over residues 48–57 (ASGTKNSTDQ) the composition is skewed to polar residues. The Proton donor/acceptor role is filled by H119. C177 (acyl-thioester intermediate) is an active-site residue.

It belongs to the bacterial sortase family. Class D subfamily.

It localises to the cell membrane. Its function is as follows. Transpeptidase that anchors surface proteins to the cell wall. Recognizes and modifies its substrate by proteolytic cleavage of a C-terminal sorting signal. Following cleavage, a covalent intermediate is formed via a thioester bond between the sortase and its substrate, which is then transferred and covalently attached to the cell wall. This sortase recognizes a Leu-Pro-Asp-Thr-Ser/Ala (LPDTS/A) motif. It has two substrates, YhcR and YfkN. The protein is Sortase D of Bacillus subtilis (strain 168).